The chain runs to 339 residues: Erlin-2 (339 aa).

Topologically, residues 1–3 are cytoplasmic; it reads MAQ. A helical transmembrane segment spans residues 4–24; the sequence is LGAVVAVASSFFCASLFSAVH. Over 25–339 the chain is Extracellular; the sequence is KIEEGHIGVY…EPLETATKDN (315 aa). Residue N106 is glycosylated (N-linked (GlcNAc...) asparagine). Residues 177 to 309 form an interaction with ERLIN1 region; it reads EAIRRNYELM…DIPNMFMDSA (133 aa). The residue at position 267 (K267) is an N6-acetyllysine.

It belongs to the band 7/mec-2 family. As to quaternary structure, forms a heteromeric complex with ERLIN1. In complex with ERLIN1, interacts with RNF170. Interacts with activated ITPR1, independently of the degree of ITPR1 polyubiquitination. Interacts with SCAP, INSIG1, SREBF1 and SREBF2 under cholesterol sufficiency conditions; indicative for an association with the SCAP-SREBP-INSIG complex. Probably part of an AMFR/gp78 and INSIG1-containing ubiquitin ligase complex involved in ERAD of HMGCR. Interacts with TMUB1; TMUB1 bridges the association with AMFR. Interacts with SYVN1 and RNF139. Interacts with TMEM259. Interacts with TMEM41B. Deubiquitinated by USP25; leading to stabilization.

The protein localises to the endoplasmic reticulum membrane. Its function is as follows. Component of the ERLIN1/ERLIN2 complex which mediates the endoplasmic reticulum-associated degradation (ERAD) of inositol 1,4,5-trisphosphate receptors (IP3Rs) such as ITPR1. Promotes sterol-accelerated ERAD of HMGCR probably implicating an AMFR/gp78-containing ubiquitin ligase complex. Involved in regulation of cellular cholesterol homeostasis by regulation the SREBP signaling pathway. May promote ER retention of the SCAP-SREBF complex. In Rattus norvegicus (Rat), this protein is Erlin-2.